We begin with the raw amino-acid sequence, 304 residues long: Probable aspartoacylase (304 aa).

The Zn(2+) site is built by His13 and Glu16. Substrate contacts are provided by residues Arg55 and 62 to 63; that span reads NR. His105 provides a ligand contact to Zn(2+). 2 residues coordinate substrate: Glu163 and Tyr273.

It belongs to the AspA/AstE family. Aspartoacylase subfamily. It depends on Zn(2+) as a cofactor.

The catalysed reaction is an N-acyl-L-aspartate + H2O = a carboxylate + L-aspartate. This chain is Probable aspartoacylase, found in Prochlorococcus marinus (strain MIT 9313).